The sequence spans 166 residues: Small ribosomal subunit protein uS5 (166 aa).

In terms of domain architecture, S5 DRBM spans 11-74 (LQEKLVQVNR…DQARRNMVKV (64 aa)).

Belongs to the universal ribosomal protein uS5 family. In terms of assembly, part of the 30S ribosomal subunit. Contacts proteins S4 and S8.

Functionally, with S4 and S12 plays an important role in translational accuracy. Located at the back of the 30S subunit body where it stabilizes the conformation of the head with respect to the body. The polypeptide is Small ribosomal subunit protein uS5 (Chromohalobacter salexigens (strain ATCC BAA-138 / DSM 3043 / CIP 106854 / NCIMB 13768 / 1H11)).